We begin with the raw amino-acid sequence, 957 residues long: Atromentin synthetase (957 aa).

The adenylation (A) domain stretch occupies residues 59 to 464 (SVQARTFQDF…SGRIKDTVIV (406 aa)). Residues 596–674 (TPSTDDEKAL…DLAKYVNGLV (79 aa)) enclose the Carrier domain. Positions 601–671 (DEKALAAIYA…IVSDLAKYVN (71 aa)) are thiolation and peptide carrier (T) domain. The residue at position 633 (Ser-633) is an O-(pantetheine 4'-phosphoryl)serine. The tract at residues 697–947 (PIFFVHPGVG…FDHVPQFQKI (251 aa)) is thioesterase (TE) domain.

The protein belongs to the ATP-dependent AMP-binding enzyme family.

It participates in secondary metabolite biosynthesis. Its function is as follows. The L-tyrosine:2-oxoglutarate aminotransferase atrD and the atromentin synthetase atrA catalyze consecutive steps to turn over L-tyrosine into atromentin, which represents the generic precursor molecule for the entire terphenylquinone and pulvinic acid family of pigments, which are widely distributed secondary metabolites in homobasidiomycetes. The first step is catalyzed by atrD which converts L-tyrosine in to 4-hydroxyphenylpyruvate (4-HPP). Adenylation of two 4-HPP monomers by the atrA adenylation (A) domain, ester bond formation between monomers and atrA, and symmetric C-C-bond formation between two monomers by atrA leads to atromentin. The sequence is that of Atromentin synthetase from Tapinella panuoides (Oyster rollrim mushroom).